A 159-amino-acid chain; its full sequence is Prs ADP-ribosylating antitoxin (159 aa).

The segment at 99–159 (EDMVEESGET…LAQIQSGAFA (61 aa)) is sufficient to neutralize toxin.

The protein belongs to the MbcA/ParS/Xre antitoxin family. As to quaternary structure, forms heterotetrameric ParS(2)-ParT(2) complexes. The 2 antitoxin fragments do not make contact in the crystal structure.

Functionally, antitoxin component of a type II toxin-antitoxin (TA) system. Neutralizes the bacteriostatic effect of cognate toxin ParT by inserting into its active site. In Sphingobium sp. (strain YBL2), this protein is Prs ADP-ribosylating antitoxin.